Here is a 220-residue protein sequence, read N- to C-terminus: Pyridoxine/pyridoxamine 5'-phosphate oxidase (220 aa).

Substrate contacts are provided by residues 13-16 (RVEY) and Lys-77. Residues 72–77 (RTVLCK), 87–88 (FT), Lys-94, and Gln-116 each bind FMN. Substrate is bound by residues Tyr-134, Arg-138, and Ser-142. Residues 151–152 (QS) and Trp-197 each bind FMN. 203 to 205 (RVH) lines the substrate pocket. Arg-207 is an FMN binding site.

This sequence belongs to the pyridoxamine 5'-phosphate oxidase family. Homodimer. Requires FMN as cofactor.

It catalyses the reaction pyridoxamine 5'-phosphate + O2 + H2O = pyridoxal 5'-phosphate + H2O2 + NH4(+). The catalysed reaction is pyridoxine 5'-phosphate + O2 = pyridoxal 5'-phosphate + H2O2. It participates in cofactor metabolism; pyridoxal 5'-phosphate salvage; pyridoxal 5'-phosphate from pyridoxamine 5'-phosphate: step 1/1. The protein operates within cofactor metabolism; pyridoxal 5'-phosphate salvage; pyridoxal 5'-phosphate from pyridoxine 5'-phosphate: step 1/1. In terms of biological role, catalyzes the oxidation of either pyridoxine 5'-phosphate (PNP) or pyridoxamine 5'-phosphate (PMP) into pyridoxal 5'-phosphate (PLP). The protein is Pyridoxine/pyridoxamine 5'-phosphate oxidase of Mycobacterium sp. (strain KMS).